We begin with the raw amino-acid sequence, 641 residues long: Bifunctional enzyme NodQ (641 aa).

The interval 1–458 (MSYVQSIPPH…KSARSAMKNQ (458 aa)) is sulfate adenylyltransferase. One can recognise a tr-type G domain in the interval 22 to 236 (KSILRFITCG…YLETVELDPT (215 aa)). The segment at 31 to 38 (GSVDDGKS) is G1. 31–38 (GSVDDGKS) provides a ligand contact to GTP. The tract at residues 89–93 (GITID) is G2. Residues 110-113 (DTPG) form a G3 region. Residues 110-114 (DTPGH) and 165-168 (NKID) each bind GTP. The G4 stretch occupies residues 165–168 (NKID). A G5 region spans residues 202-204 (SAR). The segment at 459-641 (LPAVLWFTGL…GQMTPLQRPT (183 aa)) is adenylyl-sulfate kinase. Residue 467-474 (GLSGSGKS) coordinates ATP. S541 (phosphoserine intermediate) is an active-site residue.

The protein in the C-terminal section; belongs to the APS kinase family. This sequence in the N-terminal section; belongs to the TRAFAC class translation factor GTPase superfamily. Classic translation factor GTPase family. CysN/NodQ subfamily. As to quaternary structure, sulfate-activating enzymes, NodP and NodQ, may be physically associated.

The enzyme catalyses sulfate + ATP + H(+) = adenosine 5'-phosphosulfate + diphosphate. The catalysed reaction is adenosine 5'-phosphosulfate + ATP = 3'-phosphoadenylyl sulfate + ADP + H(+). Functionally, proposed to provide activated sulfate for transfer to Nod factor. ATP sulfurylase may be the GTPase, regulating ATP sulfurylase activity. Its function is as follows. APS kinase catalyzes the synthesis of activated sulfate. In Rhizobium meliloti (strain 1021) (Ensifer meliloti), this protein is Bifunctional enzyme NodQ (nodQ).